Reading from the N-terminus, the 242-residue chain is Polycomb group RING finger protein 3 (242 aa).

The segment at 17 to 56 (CRLCNGYLIDATTVTECLHTFCRSCLVKYLEENNTCPTCR) adopts an RING-type zinc-finger fold. Residues 120–149 (EAHRNGETKTDEHTHKEPPEEKQEEDHDYH) are disordered.

Component of a PRC1-like complex.

The protein localises to the nucleus. Its function is as follows. Component of a Polycomb group (PcG) multiprotein PRC1-like complex, a complex class required to maintain the transcriptionally repressive state of many genes, including Hox genes, throughout development. PcG PRC1 complex acts via chromatin remodeling and modification of histones; it mediates monoubiquitination of histone H2A 'Lys-119', rendering chromatin heritably changed in its expressibility. Within the PRC1-like complex, regulates RNF2 ubiquitin ligase activity. This Xenopus tropicalis (Western clawed frog) protein is Polycomb group RING finger protein 3 (pcgf3).